Here is a 601-residue protein sequence, read N- to C-terminus: Ubiquilin-4 (601 aa).

The Ubiquitin-like domain occupies 13–87; the sequence is IRVTVKTPKD…VHLVIKTPQK (75 aa). Residues lysine 23 and lysine 62 each participate in a glycyl lysine isopeptide (Lys-Gly) (interchain with G-Cter in SUMO2) cross-link. A disordered region spans residues 87–155; sequence KAQDPAAATA…GAGEGSPSAT (69 aa). Residues 88-138 are compositionally biased toward low complexity; the sequence is AQDPAAATASSPSTPDPASAPSTTPASPATPAQPSTSGSASSDAGSGSRRS. 2 positions are modified to phosphoserine: serine 98 and serine 144. Over residues 139–149 the composition is skewed to gly residues; the sequence is SGGGPSPGAGE. 2 STI1 domains span residues 192–229 and 230–261; these read NPEM…QQLM and ERNP…MQEM. Residue threonine 287 is modified to Phosphothreonine. The segment at 301–366 is disordered; the sequence is FGNNPFSSLA…QVHPTVSNPF (66 aa). The segment covering 307-318 has biased composition (low complexity); sequence SSLAGNSDSSSS. At serine 318 the chain carries Phosphoserine; by ATM. Positions 329–340 are enriched in pro residues; it reads LPNPWSPSPPTS. Residues 344–354 show a composition bias toward gly residues; that stretch reads GSGGEGTGGSG. The segment covering 357 to 366 has biased composition (polar residues); sequence QVHPTVSNPF. 2 STI1 domains span residues 393-440 and 444-476; these read NPQL…QEQL and LPVF…QQGL. Positions 490-533 are disordered; that stretch reads LGSFGISRTPAPSAGSNAGSTPEAPTSSPATPATSSPTGASSAQ. Residues 507 to 533 show a composition bias toward low complexity; it reads AGSTPEAPTSSPATPATSSPTGASSAQ. A UBA domain is found at 553-598; the sequence is QTPEVRFQQQLEQLNSMGFINREANLQALIATGGDINAAIERLLGS.

Homooligomer. Binds signal sequences of proteins that are targeted to the endoplasmic reticulum. Interacts (via UBA domain) with GJA1 (not ubiquitinated) and with ubiquitin; both compete for the same binding site. Interacts (via UBA domain) with ubiquitin and with polyubiquitin chains. Interacts (via ubiquitin-like domain) with PSMD2 and PSMD4, regulatory subunits of the 26S proteasome. Interacts with ATXN1/SCA1; interaction with ATXN1 inhibits polyubiquitination of UBQLN4 and interferes with PSMD4 binding. Interacts with HERPUD1. Interacts (via ubiquitin-like domain) with UBQLN1 (via UBA domain). Interacts with UBQLN2. Interacts (via STI1 1 and 2 domains) with MAP1LC3A/B/C. Interacts with BAG6. Interacts with MRE11 (when ubiquitinated); interaction with ubiquitinated MRE11 leads to MRE11 removal from chromatin. Interacts with DESI1/POST; leading to nuclear export. Interacts with BCL2A1 and BCL2L10. In terms of assembly, (Microbial infection) Interacts with Mumps virus protein SH. In terms of processing, phosphorylated by ATM at Ser-318 in response to DNA damage, leading to localization in the nucleus and recruitment to sites of DNA damage. Post-translationally, ubiquitinated; this does not lead to proteasomal degradation. May undergo both 'Lys-48'- and 'Lys-63'-linked polyubiquitination. Highly expressed in pancreas, kidney, skeletal muscle, heart and throughout the brain, and at lower levels in placenta, lung and liver.

The protein localises to the nucleus. The protein resides in the cytoplasm. It localises to the chromosome. Its subcellular location is the endoplasmic reticulum. It is found in the perinuclear region. The protein localises to the cytoplasmic vesicle. The protein resides in the autophagosome. Its function is as follows. Regulator of protein degradation that mediates the proteasomal targeting of misfolded, mislocalized or accumulated proteins. Acts by binding polyubiquitin chains of target proteins via its UBA domain and by interacting with subunits of the proteasome via its ubiquitin-like domain. Key regulator of DNA repair that represses homologous recombination repair: in response to DNA damage, recruited to sites of DNA damage following phosphorylation by ATM and acts by binding and removing ubiquitinated MRE11 from damaged chromatin, leading to MRE11 degradation by the proteasome. MRE11 degradation prevents homologous recombination repair, redirecting double-strand break repair toward non-homologous end joining (NHEJ). Specifically recognizes and binds mislocalized transmembrane-containing proteins and targets them to proteasomal degradation. Collaborates with DESI1/POST in the export of ubiquitinated proteins from the nucleus to the cytoplasm. Also plays a role in the regulation of the proteasomal degradation of non-ubiquitinated GJA1. Acts as an adapter protein that recruits UBQLN1 to the autophagy machinery. Mediates the association of UBQLN1 with autophagosomes and the autophagy-related protein LC3 (MAP1LC3A/B/C) and may assist in the maturation of autophagosomes to autolysosomes by mediating autophagosome-lysosome fusion. In Homo sapiens (Human), this protein is Ubiquilin-4.